Reading from the N-terminus, the 308-residue chain is Maspardin (308 aa).

The AB hydrolase-1 domain occupies 87–159 (FCDGFRKLLD…NSFWLMPAFM (73 aa)). At serine 304 the chain carries Phosphoserine.

This sequence belongs to the AB hydrolase superfamily. As to quaternary structure, interacts with CD4. Interacts with ALDH16A1.

It is found in the cytoplasm. Its function is as follows. May play a role as a negative regulatory factor in CD4-dependent T-cell activation. This is Maspardin (SPG21) from Pongo abelii (Sumatran orangutan).